The sequence spans 254 residues: 5-oxoprolinase subunit A (254 aa).

It belongs to the LamB/PxpA family. As to quaternary structure, forms a complex composed of PxpA, PxpB and PxpC.

It catalyses the reaction 5-oxo-L-proline + ATP + 2 H2O = L-glutamate + ADP + phosphate + H(+). Its function is as follows. Catalyzes the cleavage of 5-oxoproline to form L-glutamate coupled to the hydrolysis of ATP to ADP and inorganic phosphate. The polypeptide is 5-oxoprolinase subunit A (Carboxydothermus hydrogenoformans (strain ATCC BAA-161 / DSM 6008 / Z-2901)).